The sequence spans 754 residues: tRNA(Met) cytidine acetyltransferase TmcA (754 aa).

The interval 181–202 is disordered; it reads GISFDAAPPRVPTEKDRRSPRR. The span at 192–202 shows a compositional bias: basic and acidic residues; it reads PTEKDRRSPRR. ATP contacts are provided by residues Gln212, 236-245, and Arg383; that span reads GRGKSSAAGL. The N-acetyltransferase domain maps to 418–603; that stretch reads VSYRALSPDD…YSALMTRPLS (186 aa). Acetyl-CoA is bound by residues 529 to 531, 536 to 542, and Glu568; these read IAT and RSSGLGS.

It belongs to the RNA cytidine acetyltransferase family. TmcA subfamily.

The protein localises to the cytoplasm. The enzyme catalyses cytidine(34) in elongator tRNA(Met) + acetyl-CoA + ATP + H2O = N(4)-acetylcytidine(34) in elongator tRNA(Met) + ADP + phosphate + CoA + H(+). In terms of biological role, catalyzes the formation of N(4)-acetylcytidine (ac(4)C) at the wobble position of tRNA(Met), by using acetyl-CoA as an acetyl donor and ATP (or GTP). This Haloferax volcanii (strain ATCC 29605 / DSM 3757 / JCM 8879 / NBRC 14742 / NCIMB 2012 / VKM B-1768 / DS2) (Halobacterium volcanii) protein is tRNA(Met) cytidine acetyltransferase TmcA.